A 913-amino-acid polypeptide reads, in one-letter code: Zinc finger protein 112 (913 aa).

The region spanning 8 to 79 (VTFKDVAVVF…ETETPRDGCS (72 aa)) is the KRAB domain. K256 is covalently cross-linked (Glycyl lysine isopeptide (Lys-Gly) (interchain with G-Cter in SUMO2)). The C2H2-type 1; degenerate zinc-finger motif lies at 258–280 (YPCTGYRKAFSNDSSSEVHQQFH). The segment at 443–465 (YNSEECGNGFSLASHFQDLQIVH) adopts a C2H2-type 2; degenerate zinc-finger fold. The segment at 471–493 (YKRYVCSNSFSHNLYLQGHPKIH) adopts a C2H2-type 3; degenerate zinc-finger fold. The segment at 497 to 519 (KPRKEHGNGFNWSSKLKDHQRVH) adopts a C2H2-type 4; degenerate zinc-finger fold. 13 consecutive C2H2-type zinc fingers follow at residues 525–547 (YKCN…QRVH), 553–575 (YKCE…QRVH), 581–603 (YKCE…QRVH), 609–631 (YKCE…QRVH), 637–659 (FKCE…QRVH), 665–687 (YKCE…QRVH), 693–715 (YQCD…QSVH), 721–743 (YICE…QRVH), 749–771 (YKCE…RRVH), 777–799 (YKCE…QRVH), 805–827 (YKCE…HRVH), 833–855 (YKCE…QRVH), and 861–883 (YKCD…QRVH). K890 participates in a covalent cross-link: Glycyl lysine isopeptide (Lys-Gly) (interchain with G-Cter in SUMO2).

It belongs to the krueppel C2H2-type zinc-finger protein family.

Its subcellular location is the nucleus. Its function is as follows. May be involved in transcriptional regulation. This is Zinc finger protein 112 (ZNF112) from Homo sapiens (Human).